A 181-amino-acid polypeptide reads, in one-letter code: Large ribosomal subunit protein uL5 (181 aa).

This sequence belongs to the universal ribosomal protein uL5 family. In terms of assembly, part of the 50S ribosomal subunit; part of the 5S rRNA/L5/L18/L25 subcomplex. Contacts the 5S rRNA and the P site tRNA. Forms a bridge to the 30S subunit in the 70S ribosome.

This is one of the proteins that bind and probably mediate the attachment of the 5S RNA into the large ribosomal subunit, where it forms part of the central protuberance. In the 70S ribosome it contacts protein S13 of the 30S subunit (bridge B1b), connecting the 2 subunits; this bridge is implicated in subunit movement. Contacts the P site tRNA; the 5S rRNA and some of its associated proteins might help stabilize positioning of ribosome-bound tRNAs. The sequence is that of Large ribosomal subunit protein uL5 from Helicobacter pylori (strain P12).